A 307-amino-acid chain; its full sequence is Ribonuclease Z (307 aa).

Residues H63, H65, D67, H68, H141, D212, and H270 each coordinate Zn(2+). D67 functions as the Proton acceptor in the catalytic mechanism.

This sequence belongs to the RNase Z family. Homodimer. The cofactor is Zn(2+).

The catalysed reaction is Endonucleolytic cleavage of RNA, removing extra 3' nucleotides from tRNA precursor, generating 3' termini of tRNAs. A 3'-hydroxy group is left at the tRNA terminus and a 5'-phosphoryl group is left at the trailer molecule.. Its function is as follows. Zinc phosphodiesterase, which displays some tRNA 3'-processing endonuclease activity. Probably involved in tRNA maturation, by removing a 3'-trailer from precursor tRNA. The sequence is that of Ribonuclease Z from Bacillus thuringiensis subsp. konkukian (strain 97-27).